Reading from the N-terminus, the 187-residue chain is MPPSPPKSPFISSSLKGAHEDRKFKCYRGVRKRSWGKWVSEIRVPKTGRRIWLGSYDAPEKAARAYDAALFCIRGEKGVYNFPTDKKPQLPEGSVRPLSKLDIQTIATNYASSVVHVPSHATTLPATTQVPSEVPASSDVSASTEITEMVDEYYLPTDATAESIFSVEDLQLDSFLMMDIDWINNLI.

A DNA-binding region (AP2/ERF) is located at residues 26 to 83 (CYRGVRKRSWGKWVSEIRVPKTGRRIWLGSYDAPEKAARAYDAALFCIRGEKGVYNFP).

It belongs to the AP2/ERF transcription factor family. ERF subfamily.

Its subcellular location is the nucleus. Its function is as follows. Probably acts as a transcriptional activator. Binds to the GCC-box pathogenesis-related promoter element. May be involved in the regulation of gene expression by stress factors and by components of stress signal transduction pathways. The protein is Ethylene-responsive transcription factor ERF015 (ERF015) of Arabidopsis thaliana (Mouse-ear cress).